We begin with the raw amino-acid sequence, 403 residues long: Chromatin structure-remodeling complex subunit rsc58 (403 aa).

The span at 376 to 389 shows a compositional bias: low complexity; it reads SLSMNGSLSPSSTN. Positions 376 to 403 are disordered; it reads SLSMNGSLSPSSTNVPLQSYRRTTKSRR. Ser384 carries the post-translational modification Phosphoserine.

In terms of assembly, component of the RSC complex composed of at least arp9, arp42, rsc1, rsc4, rsc7, rsc9, rsc58, sfh1, snf21, ssr1, ssr2, ssr3 and ssr4. The complex interacts with histone and histone variant components of centromeric chromatin.

It is found in the cytoplasm. Its subcellular location is the nucleus. Its function is as follows. Component of the chromatin structure remodeling complex (RSC), which is involved in transcription regulation and nucleosome positioning. Controls particularly membrane and organelle development genes. This chain is Chromatin structure-remodeling complex subunit rsc58 (rsc58), found in Schizosaccharomyces pombe (strain 972 / ATCC 24843) (Fission yeast).